We begin with the raw amino-acid sequence, 294 residues long: Putative sugar lactone lactonase (294 aa).

A divalent metal cation contacts are provided by E21, N150, and D201. D201 (proton donor/acceptor) is an active-site residue.

The protein belongs to the SMP-30/CGR1 family. The cofactor is a divalent metal cation.

Involved in the degradation of galactose via the DeLey-Doudoroff pathway. The polypeptide is Putative sugar lactone lactonase (Rhizobium meliloti (strain 1021) (Ensifer meliloti)).